Consider the following 199-residue polypeptide: Holliday junction branch migration complex subunit RuvA (199 aa).

Residues 1 to 62 form a domain I region; the sequence is MIAYIKGLLA…EDGIQFFGFA (62 aa). A domain II region spans residues 63–141; that stretch reads KEDEKECFLL…GMAAVEHSTL (79 aa). The tract at residues 142–152 is flexible linker; sequence QQSVITTGSGD. The domain III stretch occupies residues 152–199; the sequence is DEAVEALLALGYSQGEARDAVKKAQKSAPEEDLSALIKIALKELAPSR.

The protein belongs to the RuvA family. Homotetramer. Forms an RuvA(8)-RuvB(12)-Holliday junction (HJ) complex. HJ DNA is sandwiched between 2 RuvA tetramers; dsDNA enters through RuvA and exits via RuvB. An RuvB hexamer assembles on each DNA strand where it exits the tetramer. Each RuvB hexamer is contacted by two RuvA subunits (via domain III) on 2 adjacent RuvB subunits; this complex drives branch migration. In the full resolvosome a probable DNA-RuvA(4)-RuvB(12)-RuvC(2) complex forms which resolves the HJ.

Its subcellular location is the cytoplasm. Functionally, the RuvA-RuvB-RuvC complex processes Holliday junction (HJ) DNA during genetic recombination and DNA repair, while the RuvA-RuvB complex plays an important role in the rescue of blocked DNA replication forks via replication fork reversal (RFR). RuvA specifically binds to HJ cruciform DNA, conferring on it an open structure. The RuvB hexamer acts as an ATP-dependent pump, pulling dsDNA into and through the RuvAB complex. HJ branch migration allows RuvC to scan DNA until it finds its consensus sequence, where it cleaves and resolves the cruciform DNA. This chain is Holliday junction branch migration complex subunit RuvA, found in Desulforamulus reducens (strain ATCC BAA-1160 / DSM 100696 / MI-1) (Desulfotomaculum reducens).